The following is a 482-amino-acid chain: UDP-N-acetylmuramate--L-alanine ligase (482 aa).

An ATP-binding site is contributed by 119–125 (GTHGKTT).

This sequence belongs to the MurCDEF family.

It localises to the cytoplasm. The catalysed reaction is UDP-N-acetyl-alpha-D-muramate + L-alanine + ATP = UDP-N-acetyl-alpha-D-muramoyl-L-alanine + ADP + phosphate + H(+). Its pathway is cell wall biogenesis; peptidoglycan biosynthesis. Its function is as follows. Cell wall formation. The sequence is that of UDP-N-acetylmuramate--L-alanine ligase from Cyanothece sp. (strain PCC 7425 / ATCC 29141).